Consider the following 157-residue polypeptide: Myosin essential light chain, striated adductor muscle (157 aa).

EF-hand domains follow at residues 7–44 and 82–117; these read DEID…LGIN and GTFA…LGER.

Functionally, in molluscan muscle, calcium regulation is associated with myosin rather than with actin. Muscle myosin contains two types of light chains: the catalytic light chain, essential for ATPase activity, and the regulatory light chain, a calcium-binding protein responsible for Ca(2+) dependent binding and Ca(2+) dependent Mg-ATPase activity. This Argopecten irradians (Bay scallop) protein is Myosin essential light chain, striated adductor muscle.